Consider the following 154-residue polypeptide: Large ribosomal subunit protein uL13 (154 aa).

Belongs to the universal ribosomal protein uL13 family. Part of the 50S ribosomal subunit.

This protein is one of the early assembly proteins of the 50S ribosomal subunit, although it is not seen to bind rRNA by itself. It is important during the early stages of 50S assembly. This is Large ribosomal subunit protein uL13 from Rhizobium johnstonii (strain DSM 114642 / LMG 32736 / 3841) (Rhizobium leguminosarum bv. viciae).